Consider the following 757-residue polypeptide: Mitofusin-2 (757 aa).

At 1 to 604 (MSLLFSRCNS…TQEEFMVSMV (604 aa)) the chain is on the cytoplasmic side. The interval 30–94 (KHFVTAKKKI…VRGISEVLAR (65 aa)) is part of a helix bundle domain, formed by helices from N-terminal and C-terminal regions. The 250-residue stretch at 93-342 (ARRHMKVAFF…VRMFEFQNFE (250 aa)) folds into the Dynamin-type G domain. The segment at 103–110 (GRTSNGKS) is G1 motif. GTP is bound at residue 106 to 111 (SNGKST). Thr111 carries the phosphothreonine; by PINK1 modification. The tract at residues 129–130 (TT) is G2 motif. Residues 199-202 (DSPG) form a G3 motif region. 258-261 (NRWD) contributes to the GTP binding site. Residues 258–261 (NRWD) are G4 motif. A region of interest (G5 motif) is located at residue Glu288. GTP-binding residues include Ser305 and Lys307. Residues 359 to 385 (EQHTVRAKQIAEAVRLIMDSLHMAARE) form a part of a helix bundle domain, formed by helices from N-terminal and C-terminal regions region. A coiled-coil region spans residues 391–434 (EEMREERQDRLKFIDKQLELLAQDYKLRIKQITEEVERQVSTAM). Ser442 bears the Phosphoserine; by PINK1 mark. The helical transmembrane segment at 605-625 (TGLASLTSRTSMGILVVGGVV) threads the bilayer. Position 626 (Trp626) is a topological domain, mitochondrial intermembrane. A helical transmembrane segment spans residues 627–647 (KAVGWRLIALSFGLYGLLYVY). Residues 648-757 (ERLTWTTKAK…FTHQYLQPSR (110 aa)) are Cytoplasmic-facing. Positions 695–738 (TFAHLCQQVDVTRENLEQEIAAMNKKIEVLDSLQSKAKLLRNKA) form a coiled coil. The tract at residues 722–753 (EVLDSLQSKAKLLRNKAGWLDSELNMFTHQYL) is part of a helix bundle domain, formed by helices from N-terminal and C-terminal regions.

The protein belongs to the TRAFAC class dynamin-like GTPase superfamily. Dynamin/Fzo/YdjA family. Mitofusin subfamily. Forms homomultimers and heteromultimers with MFN1. Oligomerization is essential for mitochondrion fusion. Interacts with VAT1. Interacts with STOML2; may form heterooligomers. Interacts (phosphorylated) with PRKN. Interacts with EIF2AK3. Interacts with THG1L; THG1L probably functions as a guanyl-nucleotide exchange factor/GEF, activating MFN2. Post-translationally, phosphorylated by PINK1. In terms of processing, ubiquitinated by non-degradative ubiquitin by PRKN, promoting mitochondrial fusion; deubiquitination by USP30 inhibits mitochondrial fusion. Ubiquitinated by HUWE1 when dietary stearate (C18:0) levels are low; ubiquitination inhibits mitochondrial fusion. As to expression, ubiquitous; expressed at low level. Highly expressed in heart and kidney.

The protein localises to the mitochondrion outer membrane. It carries out the reaction GTP + H2O = GDP + phosphate + H(+). In terms of biological role, mitochondrial outer membrane GTPase that mediates mitochondrial clustering and fusion. Mitochondria are highly dynamic organelles, and their morphology is determined by the equilibrium between mitochondrial fusion and fission events. Overexpression induces the formation of mitochondrial networks. Membrane clustering requires GTPase activity and may involve a major rearrangement of the coiled coil domains. Plays a central role in mitochondrial metabolism and may be associated with obesity and/or apoptosis processes. Plays an important role in the regulation of vascular smooth muscle cell proliferation. Involved in the clearance of damaged mitochondria via selective autophagy (mitophagy). Is required for PRKN recruitment to dysfunctional mitochondria. Involved in the control of unfolded protein response (UPR) upon ER stress including activation of apoptosis and autophagy during ER stress. Acts as an upstream regulator of EIF2AK3 and suppresses EIF2AK3 activation under basal conditions. The sequence is that of Mitofusin-2 from Homo sapiens (Human).